The following is a 245-amino-acid chain: DNA polymerase sliding clamp (245 aa).

Belongs to the PCNA family. In terms of assembly, homotrimer. The subunits circularize to form a toroid; DNA passes through its center. Replication factor C (RFC) is required to load the toroid on the DNA.

Sliding clamp subunit that acts as a moving platform for DNA processing. Responsible for tethering the catalytic subunit of DNA polymerase and other proteins to DNA during high-speed replication. The polypeptide is DNA polymerase sliding clamp (Methanosarcina barkeri (strain Fusaro / DSM 804)).